Reading from the N-terminus, the 172-residue chain is MKKKSIKDKEQENNWEEKVVQVKRVTKVVKGGKKLSFRAILIVGNEKGEIGVGIGKASDVIGAVKKGVTDAKKHIINVPLTKSYSIPHPIEGISGAAKVILRPSAIGSGVIAGGSTRTVLELAGVKNILAKQLRSSNTLNNARAVLNALSQLRTFQNTAQNRDINIERLFNM.

In terms of domain architecture, S5 DRBM spans 15–78; sequence WEEKVVQVKR…TDAKKHIINV (64 aa).

This sequence belongs to the universal ribosomal protein uS5 family. Part of the 30S ribosomal subunit. Contacts protein S4.

The protein resides in the plastid. Its subcellular location is the chloroplast. With S4 and S12 plays an important role in translational accuracy. The protein is Small ribosomal subunit protein uS5c (rps5) of Gracilaria tenuistipitata var. liui (Red alga).